The chain runs to 1202 residues: DNA-directed RNA polymerase subunit beta (1202 aa).

This sequence belongs to the RNA polymerase beta chain family. The RNAP catalytic core consists of 2 alpha, 1 beta, 1 beta' and 1 omega subunit. When a sigma factor is associated with the core the holoenzyme is formed, which can initiate transcription.

It catalyses the reaction RNA(n) + a ribonucleoside 5'-triphosphate = RNA(n+1) + diphosphate. Functionally, DNA-dependent RNA polymerase catalyzes the transcription of DNA into RNA using the four ribonucleoside triphosphates as substrates. The sequence is that of DNA-directed RNA polymerase subunit beta from Leuconostoc mesenteroides subsp. mesenteroides (strain ATCC 8293 / DSM 20343 / BCRC 11652 / CCM 1803 / JCM 6124 / NCDO 523 / NBRC 100496 / NCIMB 8023 / NCTC 12954 / NRRL B-1118 / 37Y).